The chain runs to 177 residues: Transcriptional repressor NrdR (177 aa).

A zinc finger spans residues 3–34; it reads CPYCGGSETQVKDSRPSEDGAAIRRRRVCPDC. One can recognise an ATP-cone domain in the interval 49-139; it reads VVVLKRSGKR…VYKNFREARD (91 aa). A disordered region spans residues 148–177; it reads SDGMPVPAAAPEAEGDPEPEASGRRRAGRP.

The protein belongs to the NrdR family. Requires Zn(2+) as cofactor.

In terms of biological role, negatively regulates transcription of bacterial ribonucleotide reductase nrd genes and operons by binding to NrdR-boxes. This Methylobacterium radiotolerans (strain ATCC 27329 / DSM 1819 / JCM 2831 / NBRC 15690 / NCIMB 10815 / 0-1) protein is Transcriptional repressor NrdR.